The primary structure comprises 356 residues: DNA polymerase IV (356 aa).

A UmuC domain is found at Ile6–Gly187. The Mg(2+) site is built by Asp10 and Asp105. Residue Glu106 is part of the active site.

It belongs to the DNA polymerase type-Y family. As to quaternary structure, monomer. It depends on Mg(2+) as a cofactor.

The protein localises to the cytoplasm. It catalyses the reaction DNA(n) + a 2'-deoxyribonucleoside 5'-triphosphate = DNA(n+1) + diphosphate. Its function is as follows. Poorly processive, error-prone DNA polymerase involved in untargeted mutagenesis. Copies undamaged DNA at stalled replication forks, which arise in vivo from mismatched or misaligned primer ends. These misaligned primers can be extended by PolIV. Exhibits no 3'-5' exonuclease (proofreading) activity. May be involved in translesional synthesis, in conjunction with the beta clamp from PolIII. This Staphylococcus aureus (strain JH1) protein is DNA polymerase IV.